Consider the following 556-residue polypeptide: Arginine--tRNA ligase (556 aa).

The short motif at 132 to 142 (ANPTGSLHLGH) is the 'HIGH' region element.

The protein belongs to the class-I aminoacyl-tRNA synthetase family. Monomer.

Its subcellular location is the cytoplasm. It carries out the reaction tRNA(Arg) + L-arginine + ATP = L-arginyl-tRNA(Arg) + AMP + diphosphate. The polypeptide is Arginine--tRNA ligase (Anoxybacillus flavithermus (strain DSM 21510 / WK1)).